The chain runs to 61 residues: Bactericidin B-5P (61 aa).

Residues 1 to 22 (MNFSRVLFFVFACLSAFAMASA) form the signal peptide. Residues 23–24 (AP) constitute a propeptide, removed by a dipeptidylpeptidase. Glycine amide is present on Gly60.

This sequence belongs to the cecropin family.

It is found in the secreted. Functionally, cecropins have lytic and antibacterial activity against several Gram-positive and Gram-negative bacteria. This is Bactericidin B-5P from Manduca sexta (Tobacco hawkmoth).